The sequence spans 416 residues: Serine hydroxymethyltransferase 1 (416 aa).

(6S)-5,6,7,8-tetrahydrofolate is bound by residues L121 and 125 to 127; that span reads GHL. K229 is modified (N6-(pyridoxal phosphate)lysine). Residues E245 and 354 to 356 contribute to the (6S)-5,6,7,8-tetrahydrofolate site; that span reads SPF.

It belongs to the SHMT family. Homodimer. Pyridoxal 5'-phosphate serves as cofactor.

It localises to the cytoplasm. It carries out the reaction (6R)-5,10-methylene-5,6,7,8-tetrahydrofolate + glycine + H2O = (6S)-5,6,7,8-tetrahydrofolate + L-serine. Its pathway is one-carbon metabolism; tetrahydrofolate interconversion. It functions in the pathway amino-acid biosynthesis; glycine biosynthesis; glycine from L-serine: step 1/1. Functionally, catalyzes the reversible interconversion of serine and glycine with tetrahydrofolate (THF) serving as the one-carbon carrier. This reaction serves as the major source of one-carbon groups required for the biosynthesis of purines, thymidylate, methionine, and other important biomolecules. Also exhibits THF-independent aldolase activity toward beta-hydroxyamino acids, producing glycine and aldehydes, via a retro-aldol mechanism. The sequence is that of Serine hydroxymethyltransferase 1 from Vibrio parahaemolyticus serotype O3:K6 (strain RIMD 2210633).